A 643-amino-acid chain; its full sequence is MPIITLPDGSQRQFDNPVSVLEVAQSIGAGLAKATIAGRVNGERRDACDMITEDSTLEIITAKDEDGLEIIRHSCAHLLGHAIKQLFPDVKMAIGPTIDNGFYYDVDLEHSLSQEDLDALEKRMLELAKTNYDVVKRRVSWQEARDTFEKRGEPYKMAILDENIAKDDHPALYHHEEYIDMCRGPHVPNMRFCHHFKLQKVAGAYWRGDSKNKMLQRIYGTAWADKKQLNEYLTRLEEAAKRDHRKIGKALDLYHMQEEAPGMVFWHNDGWTIFRELETFVRTKLKEYDYQEVKGPFMMDRVLWEKTGHWQNYGDLMFTTQSENREYAIKPMNCPGHVQIFNQGLKSYRDLPIRMAEFGSCHRNEPSGSLHGLMRVRGFTQDDAHIFCTEDQIESEVTSCIRMVYDIYSTFGFTNIAVKLSTRPENRIGDDAMWDRAEQGLANALAHNGLQYEIQEGEGAFYGPKIEFALRDCLDREWQCGTVQLDFALPGRLNASYVAEDNDRRTPVMIHRAILGSIERFIGIITEEYAGFFPSWLAPVQAVVMNITDSQAEYVQKVTKTLSDAGLRVKSDLRNEKVGFKVREHTLRRVPYMLVCGDKEISEGKVSVRTRRGADLGTYSVEEFVEILKNQVRSRELKLLGEE.

Residues 1-61 (MPIITLPDGS…TEDSTLEIIT (61 aa)) enclose the TGS domain. The catalytic stretch occupies residues 243–534 (DHRKIGKALD…ITEEYAGFFP (292 aa)). Residues cysteine 334, histidine 385, and histidine 511 each coordinate Zn(2+).

This sequence belongs to the class-II aminoacyl-tRNA synthetase family. Homodimer. Zn(2+) is required as a cofactor.

It localises to the cytoplasm. It carries out the reaction tRNA(Thr) + L-threonine + ATP = L-threonyl-tRNA(Thr) + AMP + diphosphate + H(+). Its function is as follows. Catalyzes the attachment of threonine to tRNA(Thr) in a two-step reaction: L-threonine is first activated by ATP to form Thr-AMP and then transferred to the acceptor end of tRNA(Thr). Also edits incorrectly charged L-seryl-tRNA(Thr). In Mannheimia succiniciproducens (strain KCTC 0769BP / MBEL55E), this protein is Threonine--tRNA ligase.